A 1307-amino-acid chain; its full sequence is Rho1 guanine nucleotide exchange factor TUS1 (1307 aa).

Positions 1–10 (MYRYNRSSPF) are enriched in polar residues. 3 disordered regions span residues 1-144 (MYRY…FIGN), 164-194 (PFANGFSPNSPKSPRDSSKQQAHFSDESDLR), and 219-239 (EDSEFFTKPPPPLSTSRNVSG). The segment covering 12 to 29 (RTPEKRVSRQESQRKSIE) has biased composition (basic and acidic residues). The segment covering 37–79 (NTRNSFLDDSDNGTDNISIGWTPISDTQQFQSPVPQAFTFTSK) has biased composition (polar residues). The segment covering 87 to 97 (TSSSESTPKST) has biased composition (low complexity). Basic and acidic residues predominate over residues 176–194 (SPRDSSKQQAHFSDESDLR). The DH domain occupies 467–657 (QRQSFIFDLI…EKLNFEVNQV (191 aa)). One can recognise a PH domain in the interval 715–877 (KLVLSGTVYK…WIDAIMESFK (163 aa)). The segment at 780-802 (TSKQPLRNYSQKEHKSPMHNFST) is disordered. The 342-residue stretch at 938–1279 (TTRILCCEDV…KLASSERREK (342 aa)) folds into the CNH domain.

As to quaternary structure, interacts with RHO1.

Its function is as follows. Guanine nucleotide-exchange factor (GEF) for RHO1 that stimulates the exchange of RHO1 GDP-bound form into GTP-bound form. Required for signaling of cell wall defects to RHO1. The protein is Rho1 guanine nucleotide exchange factor TUS1 (TUS1) of Saccharomyces cerevisiae (strain ATCC 204508 / S288c) (Baker's yeast).